Here is a 51-residue protein sequence, read N- to C-terminus: Methionine aminopeptidase (51 aa).

It belongs to the peptidase M24A family. Methionine aminopeptidase type 1 subfamily. In terms of assembly, monomer. Requires Co(2+) as cofactor. It depends on Zn(2+) as a cofactor. Mn(2+) serves as cofactor. The cofactor is Fe(2+).

It carries out the reaction Release of N-terminal amino acids, preferentially methionine, from peptides and arylamides.. Its function is as follows. Removes the N-terminal methionine from nascent proteins. The N-terminal methionine is often cleaved when the second residue in the primary sequence is small and uncharged (Met-Ala-, Cys, Gly, Pro, Ser, Thr, or Val). Requires deformylation of the N(alpha)-formylated initiator methionine before it can be hydrolyzed. The protein is Methionine aminopeptidase (map) of Geobacillus stearothermophilus (Bacillus stearothermophilus).